The chain runs to 308 residues: tRNA uridine(34) hydroxylase (308 aa).

Residues 129–223 (QEKDVLILDA…YGKHPETQGV (95 aa)) enclose the Rhodanese domain. Catalysis depends on Cys-183, which acts as the Cysteine persulfide intermediate.

It belongs to the TrhO family.

It carries out the reaction uridine(34) in tRNA + AH2 + O2 = 5-hydroxyuridine(34) in tRNA + A + H2O. Functionally, catalyzes oxygen-dependent 5-hydroxyuridine (ho5U) modification at position 34 in tRNAs. This Aster yellows witches'-broom phytoplasma (strain AYWB) protein is tRNA uridine(34) hydroxylase.